The chain runs to 292 residues: Probable E3 ubiquitin-protein ligase RNF144A (292 aa).

The interval 16-236 (PLVSCKLCLG…YDKGPCRNKL (221 aa)) is TRIAD supradomain. The Zn(2+) site is built by Cys-20, Cys-23, Cys-43, Cys-46, Cys-111, Cys-116, Cys-135, Cys-138, Cys-143, Cys-146, His-151, Cys-156, Cys-185, and Cys-188. The RING-type 1 zinc finger occupies 20–70 (CKLCLGEYTVEQMTTIAQCQCIFCTLCLKQYVELLIKEGLETAISCPDASC). The IBR-type zinc-finger motif lies at 91–156 (QKYKKLQFEK…KANWHPGQGC (66 aa)). The segment at 185–214 (CPKCKVYIERDEGCAQMMCKNCKHAFCWYC) adopts an RING-type 2; atypical zinc-finger fold. Cys-198 is a catalytic residue. Residues Cys-203, Cys-206, Cys-211, Cys-214, His-226, and Cys-232 each coordinate Zn(2+). The helical transmembrane segment at 250–270 (VVGIFAGFGLLLLVASPFLLL) threads the bilayer.

This sequence belongs to the RBR family. RNF144 subfamily.

Its subcellular location is the membrane. The enzyme catalyses [E2 ubiquitin-conjugating enzyme]-S-ubiquitinyl-L-cysteine + [acceptor protein]-L-lysine = [E2 ubiquitin-conjugating enzyme]-L-cysteine + [acceptor protein]-N(6)-ubiquitinyl-L-lysine.. It participates in protein modification; protein ubiquitination. Its function is as follows. E3 ubiquitin-protein ligase which accepts ubiquitin from E2 ubiquitin-conjugating enzymes ube2l3 and ube2l6 in the form of a thioester and then directly transfers the ubiquitin to targeted substrates. This is Probable E3 ubiquitin-protein ligase RNF144A (rnf144a) from Xenopus tropicalis (Western clawed frog).